The primary structure comprises 69 residues: Protein SlyX homolog (69 aa).

The protein belongs to the SlyX family.

The sequence is that of Protein SlyX homolog from Pseudomonas aeruginosa (strain LESB58).